The chain runs to 639 residues: Transcription factor phomR (639 aa).

Residues 14 to 41 (CWTCRLRRKKCNEGGPPCDNCEARGIHC) constitute a DNA-binding region (zn(2)-C6 fungal-type). Disordered stretches follow at residues 58–136 (REEA…AGTG) and 476–499 (LPRSPEKTSSASGKPSHGRKTGPE). Residues 68-108 (SGRGRSYSRSSSTAAAAAPKPAEGAMVTGGSSSSSRGSGSS) are compositionally biased toward low complexity.

It is found in the nucleus. Transcription factor; part of the gene cluster that mediates the biosynthesis of the phomopsins, a group of hexapeptide mycotoxins which infects lupins and causes lupinosis disease in livestock. May play a role in the regulation of the production of phomopsins. In Diaporthe leptostromiformis (Lupinosis disease fungus), this protein is Transcription factor phomR.